The following is a 440-amino-acid chain: Thymidine phosphorylase (440 aa).

Belongs to the thymidine/pyrimidine-nucleoside phosphorylase family. Homodimer.

The enzyme catalyses thymidine + phosphate = 2-deoxy-alpha-D-ribose 1-phosphate + thymine. Its pathway is pyrimidine metabolism; dTMP biosynthesis via salvage pathway; dTMP from thymine: step 1/2. In terms of biological role, the enzymes which catalyze the reversible phosphorolysis of pyrimidine nucleosides are involved in the degradation of these compounds and in their utilization as carbon and energy sources, or in the rescue of pyrimidine bases for nucleotide synthesis. This is Thymidine phosphorylase from Shigella boydii serotype 4 (strain Sb227).